The primary structure comprises 350 residues: Streptomycin biosynthesis operon possible regulatory protein (350 aa).

Positions 1 to 10 are enriched in polar residues; the sequence is MEHISGNSPE. 3 disordered regions span residues 1-20, 168-189, and 211-258; these read MEHI…AAVT, AGVP…LDPT, and AAQA…SRAD. Basic and acidic residues-rich tracts occupy residues 177–189 and 223–242; these read IGRD…LDPT and DVRK…DRQQ.

This Streptomyces griseus protein is Streptomycin biosynthesis operon possible regulatory protein (strR).